The sequence spans 246 residues: UDP-N-acetyl-D-mannosaminuronic acid transferase (246 aa).

It belongs to the glycosyltransferase 26 family.

The enzyme catalyses UDP-N-acetyl-alpha-D-mannosaminouronate + N-acetyl-alpha-D-glucosaminyl-di-trans,octa-cis-undecaprenyl diphosphate = beta-D-ManNAcA-(1-&gt;4)-alpha-D-GlcNAc-di-trans,octa-cis-undecaprenyl diphosphate + UDP + H(+). It functions in the pathway bacterial outer membrane biogenesis; enterobacterial common antigen biosynthesis. Catalyzes the synthesis of Und-PP-GlcNAc-ManNAcA (Lipid II), the second lipid-linked intermediate involved in enterobacterial common antigen (ECA) synthesis. This chain is UDP-N-acetyl-D-mannosaminuronic acid transferase, found in Salmonella choleraesuis (strain SC-B67).